A 326-amino-acid polypeptide reads, in one-letter code: DNA-directed RNA polymerase subunit alpha (326 aa).

The interval 1–231 (MQSNSLLKPR…DQLSVFADLE (231 aa)) is alpha N-terminal domain (alpha-NTD). The interval 245–326 (IDPVLLRPVD…WPPAGLEKLG (82 aa)) is alpha C-terminal domain (alpha-CTD).

It belongs to the RNA polymerase alpha chain family. As to quaternary structure, homodimer. The RNAP catalytic core consists of 2 alpha, 1 beta, 1 beta' and 1 omega subunit. When a sigma factor is associated with the core the holoenzyme is formed, which can initiate transcription.

The enzyme catalyses RNA(n) + a ribonucleoside 5'-triphosphate = RNA(n+1) + diphosphate. Its function is as follows. DNA-dependent RNA polymerase catalyzes the transcription of DNA into RNA using the four ribonucleoside triphosphates as substrates. This is DNA-directed RNA polymerase subunit alpha from Aromatoleum aromaticum (strain DSM 19018 / LMG 30748 / EbN1) (Azoarcus sp. (strain EbN1)).